The sequence spans 120 residues: ATP-dependent Clp protease adapter protein ClpS (120 aa).

Residues M1–G25 are disordered.

This sequence belongs to the ClpS family. As to quaternary structure, binds to the N-terminal domain of the chaperone ClpA.

Involved in the modulation of the specificity of the ClpAP-mediated ATP-dependent protein degradation. In Pseudomonas putida (strain W619), this protein is ATP-dependent Clp protease adapter protein ClpS.